A 435-amino-acid polypeptide reads, in one-letter code: Eukaryotic translation initiation factor 3 subunit E (435 aa).

In terms of domain architecture, PCI spans 219–392 (FFNHPKGRDL…GHVVMGTQPL (174 aa)).

It belongs to the eIF-3 subunit E family. In terms of assembly, component of the eukaryotic translation initiation factor 3 (eIF-3) complex. The eIF-3 complex interacts with pix. Interacts with mxt. In terms of tissue distribution, expression levels in females and males are relatively similar 10 days after oviposition, however by day 15 expression is higher in gravid females than in males (at protein level).

It is found in the cytoplasm. The protein localises to the microsome. The protein resides in the endoplasmic reticulum. Functionally, component of the eukaryotic translation initiation factor 3 (eIF-3) complex, which is involved in protein synthesis of a specialized repertoire of mRNAs and, together with other initiation factors, stimulates binding of mRNA and methionyl-tRNAi to the 40S ribosome. The eIF-3 complex specifically targets and initiates translation of a subset of mRNAs involved in cell proliferation. In addition to its role in the eIF-3 complex, also functions in protein ubiquitination and degradation. During mitosis required for regulating mitotic microtubule growth and kinetochore formation, and consequently is required for satisfying the spindle assembly checkpoint (SAC) during metaphase to prevent delays in mitotic progression. This is likely by promoting the ubiquitination and degradation of Klp67A, a kinesin-like protein that suppresses microtubule polymerization at plus ends. Acts in the COP9 signalosome (CSN) mediated regulation of cullin neddylation by promoting Cul1 and Cul3 neddylation and negatively regulating the CSN complex subunit CSN5. The protein is Eukaryotic translation initiation factor 3 subunit E of Drosophila melanogaster (Fruit fly).